Consider the following 296-residue polypeptide: Probable 2-(5''-triphosphoribosyl)-3'-dephosphocoenzyme-A synthase (296 aa).

Belongs to the CitG/MdcB family.

It carries out the reaction 3'-dephospho-CoA + ATP = 2'-(5''-triphospho-alpha-D-ribosyl)-3'-dephospho-CoA + adenine. This Streptococcus mutans serotype c (strain ATCC 700610 / UA159) protein is Probable 2-(5''-triphosphoribosyl)-3'-dephosphocoenzyme-A synthase.